A 100-amino-acid chain; its full sequence is Small ribosomal subunit protein uS14c (100 aa).

The protein belongs to the universal ribosomal protein uS14 family. Part of the 30S ribosomal subunit.

It is found in the plastid. Its subcellular location is the chloroplast. In terms of biological role, binds 16S rRNA, required for the assembly of 30S particles. The chain is Small ribosomal subunit protein uS14c from Crucihimalaya wallichii (Rock-cress).